The following is a 101-amino-acid chain: Large ribosomal subunit protein uL24 (101 aa).

It belongs to the universal ribosomal protein uL24 family. As to quaternary structure, part of the 50S ribosomal subunit.

One of two assembly initiator proteins, it binds directly to the 5'-end of the 23S rRNA, where it nucleates assembly of the 50S subunit. In terms of biological role, one of the proteins that surrounds the polypeptide exit tunnel on the outside of the subunit. In Cereibacter sphaeroides (strain ATCC 17025 / ATH 2.4.3) (Rhodobacter sphaeroides), this protein is Large ribosomal subunit protein uL24.